Consider the following 294-residue polypeptide: Gap junction delta-3 protein (294 aa).

At 1 to 24 (MGEWAFLGSLLDAVQLQSPLVGRL) the chain is on the cytoplasmic side. Residues 25 to 45 (WLVVMLIFRILVLATVGGAVF) traverse the membrane as a helical segment. Residues 46 to 76 (EDEQEEFVCNTLQPGCRQTCYDRAFPVSHYR) lie on the Extracellular side of the membrane. The helical transmembrane segment at 77–97 (FWLFHILLLSAPPVLFVVYSM) threads the bilayer. The Cytoplasmic portion of the chain corresponds to 98–136 (HRAGKEAGGAEAAAQCAPGLPEAQCAPCALRARRARRCY). The helical transmembrane segment at 137 to 157 (LLSVALRLLAELTFLGGQALL) threads the bilayer. Residues 158 to 188 (YGFRVAPHFACAGPPCPHTVDCFVSRPTEKT) lie on the Extracellular side of the membrane. A helical transmembrane segment spans residues 189-209 (VFVLFYFAVGLLSALLSVAEL). Over 210-294 (GHLLWKGRPR…PATGRRDLAI (85 aa)) the chain is Cytoplasmic. Residues 233 to 294 (EAQKLLPPPP…PATGRRDLAI (62 aa)) form a disordered region. A compositionally biased stretch (pro residues) spans 238–250 (LPPPPPPPPPPAL).

This sequence belongs to the connexin family. Delta-type subfamily. A connexon is composed of a hexamer of connexins. Interacts with TJP1. Expressed in vascular smooth muscle cells. Found in heart, colon, and artery (at protein level). Found in cerebral cortex, heart, liver, lung, kidney, spleen and testis.

The protein resides in the cell membrane. It localises to the cell junction. It is found in the gap junction. One gap junction consists of a cluster of closely packed pairs of transmembrane channels, the connexons, through which materials of low MW diffuse from one cell to a neighboring cell. This Homo sapiens (Human) protein is Gap junction delta-3 protein (GJD3).